The chain runs to 366 residues: Flagellar P-ring protein (366 aa).

A signal peptide spans 1–20 (MVIKFLSALILLLVTTAAQA).

This sequence belongs to the FlgI family. As to quaternary structure, the basal body constitutes a major portion of the flagellar organelle and consists of four rings (L,P,S, and M) mounted on a central rod.

The protein resides in the periplasm. Its subcellular location is the bacterial flagellum basal body. In terms of biological role, assembles around the rod to form the L-ring and probably protects the motor/basal body from shearing forces during rotation. The chain is Flagellar P-ring protein from Escherichia coli O1:K1 / APEC.